A 189-amino-acid chain; its full sequence is FUN14 domain-containing protein 2 (189 aa).

Residues 1–80 are Cytoplasmic-facing; that stretch reads METSAPRAGS…GQESGPSAEK (80 aa). 2 positions are modified to phosphoserine: Ser-10 and Ser-53. The chain crosses the membrane as a helical span at residues 81–101; the sequence is YSVATQLFIGGVTGWCTGFIF. Residues 102–107 are Mitochondrial intermembrane-facing; the sequence is QNVGKL. Residues 108–128 traverse the membrane as a helical segment; sequence AATAVGGGFFLLQLANHTGYI. At 129 to 164 the chain is on the cytoplasmic side; it reads KVDWQRVEKDMKKAKEQLKIRKSNQMPTEVRSKAEE. Ser-151 carries the post-translational modification Phosphoserine. Residues 165–185 form a helical membrane-spanning segment; that stretch reads VVSFVKKNVLVTGGFFGGFLL. The Mitochondrial intermembrane segment spans residues 186–189; sequence GMAS.

Belongs to the FUN14 family.

It is found in the mitochondrion outer membrane. The protein resides in the nucleus. Binds directly and specifically 1,2-Diacyl-sn-glycero-3-phospho-(1'-myo-inositol-3',4',5'-bisphosphate) (PIP3) leading to the recruitment of PIP3 to mitochondria and may play a role in the regulation of the platelet activation via AKT/GSK3B/cGMP signaling pathways. May act as transcription factor that regulates SREBP1 (isoform SREBP-1C) expression in order to modulate triglyceride (TG) homeostasis in hepatocytes. In Macaca mulatta (Rhesus macaque), this protein is FUN14 domain-containing protein 2.